We begin with the raw amino-acid sequence, 310 residues long: Thiamine-monophosphate kinase (310 aa).

Mg(2+) contacts are provided by D24, T38, and D39. Position 46 (D46) interacts with substrate. Residues D67 and D115 each contribute to the Mg(2+) site. ATP contacts are provided by residues 114-115 (GD) and R138. Position 203 (D203) interacts with Mg(2+). S205 contributes to the ATP binding site. A Mg(2+)-binding site is contributed by D206. Substrate contacts are provided by E251 and W306.

It belongs to the thiamine-monophosphate kinase family.

It carries out the reaction thiamine phosphate + ATP = thiamine diphosphate + ADP. Its pathway is cofactor biosynthesis; thiamine diphosphate biosynthesis; thiamine diphosphate from thiamine phosphate: step 1/1. Its function is as follows. Catalyzes the ATP-dependent phosphorylation of thiamine-monophosphate (TMP) to form thiamine-pyrophosphate (TPP), the active form of vitamin B1. This chain is Thiamine-monophosphate kinase, found in Nitrosopumilus maritimus (strain SCM1).